Consider the following 418-residue polypeptide: Actin-related protein 3-B (418 aa).

Belongs to the actin family. ARP3 subfamily. Component of the Arp2/3 complex composed of actr2/arp2, actr3/arp3, arpc1 (arpc1a or arpc1b), arpc2, arpc3, arpc4 and arpc5.

The protein localises to the cytoplasm. The protein resides in the cytoskeleton. It localises to the cell projection. Its subcellular location is the nucleus. Its function is as follows. ATP-binding component of the Arp2/3 complex, a multiprotein complex that mediates actin polymerization upon stimulation by nucleation-promoting factor (NPF). The Arp2/3 complex mediates the formation of branched actin networks in the cytoplasm, providing the force for cell motility. Seems to contact the pointed end of the daughter actin filament. In addition to its role in the cytoplasmic cytoskeleton, the Arp2/3 complex also promotes actin polymerization in the nucleus, thereby regulating gene transcription and repair of damaged DNA. The Arp2/3 complex promotes homologous recombination (HR) repair in response to DNA damage by promoting nuclear actin polymerization, leading to drive motility of double-strand breaks (DSBs). In Xenopus laevis (African clawed frog), this protein is Actin-related protein 3-B (actr3-b).